The following is a 556-amino-acid chain: Formate--tetrahydrofolate ligase (556 aa).

64–71 (TPAGEGKT) provides a ligand contact to ATP.

Belongs to the formate--tetrahydrofolate ligase family.

The enzyme catalyses (6S)-5,6,7,8-tetrahydrofolate + formate + ATP = (6R)-10-formyltetrahydrofolate + ADP + phosphate. It participates in one-carbon metabolism; tetrahydrofolate interconversion. The polypeptide is Formate--tetrahydrofolate ligase (Haemophilus ducreyi (strain 35000HP / ATCC 700724)).